Reading from the N-terminus, the 207-residue chain is LexA repressor (207 aa).

Residues 28–48 constitute a DNA-binding region (H-T-H motif); that stretch reads RAEIAQKLGFKSANAAEEHLK. Catalysis depends on for autocatalytic cleavage activity residues S124 and K161.

The protein belongs to the peptidase S24 family. In terms of assembly, homodimer.

The catalysed reaction is Hydrolysis of Ala-|-Gly bond in repressor LexA.. Represses a number of genes involved in the response to DNA damage (SOS response), including recA and lexA. In the presence of single-stranded DNA, RecA interacts with LexA causing an autocatalytic cleavage which disrupts the DNA-binding part of LexA, leading to derepression of the SOS regulon and eventually DNA repair. The protein is LexA repressor of Aeromonas salmonicida (strain A449).